Here is a 376-residue protein sequence, read N- to C-terminus: Erythronate-4-phosphate dehydrogenase (376 aa).

The substrate site is built by Ser45 and Thr67. Residue Asp147 coordinates NAD(+). Residue Arg209 is part of the active site. An NAD(+)-binding site is contributed by Asp233. The active site involves Glu238. His255 acts as the Proton donor in catalysis. Gly258 is a binding site for NAD(+). Tyr259 serves as a coordination point for substrate.

The protein belongs to the D-isomer specific 2-hydroxyacid dehydrogenase family. PdxB subfamily. Homodimer.

Its subcellular location is the cytoplasm. The catalysed reaction is 4-phospho-D-erythronate + NAD(+) = (R)-3-hydroxy-2-oxo-4-phosphooxybutanoate + NADH + H(+). Its pathway is cofactor biosynthesis; pyridoxine 5'-phosphate biosynthesis; pyridoxine 5'-phosphate from D-erythrose 4-phosphate: step 2/5. Its function is as follows. Catalyzes the oxidation of erythronate-4-phosphate to 3-hydroxy-2-oxo-4-phosphonooxybutanoate. This Shewanella sp. (strain W3-18-1) protein is Erythronate-4-phosphate dehydrogenase.